A 429-amino-acid polypeptide reads, in one-letter code: Glutamate-1-semialdehyde 2,1-aminomutase 2 (429 aa).

N6-(pyridoxal phosphate)lysine is present on K268.

It belongs to the class-III pyridoxal-phosphate-dependent aminotransferase family. HemL subfamily. In terms of assembly, homodimer. It depends on pyridoxal 5'-phosphate as a cofactor.

It is found in the cytoplasm. It catalyses the reaction (S)-4-amino-5-oxopentanoate = 5-aminolevulinate. The protein operates within porphyrin-containing compound metabolism; protoporphyrin-IX biosynthesis; 5-aminolevulinate from L-glutamyl-tRNA(Glu): step 2/2. This chain is Glutamate-1-semialdehyde 2,1-aminomutase 2, found in Bacillus mycoides (strain KBAB4) (Bacillus weihenstephanensis).